We begin with the raw amino-acid sequence, 101 residues long: Urease subunit beta (101 aa).

It belongs to the urease beta subunit family. As to quaternary structure, heterotrimer of UreA (gamma), UreB (beta) and UreC (alpha) subunits. Three heterotrimers associate to form the active enzyme.

It is found in the cytoplasm. The catalysed reaction is urea + 2 H2O + H(+) = hydrogencarbonate + 2 NH4(+). Its pathway is nitrogen metabolism; urea degradation; CO(2) and NH(3) from urea (urease route): step 1/1. This chain is Urease subunit beta, found in Ruegeria pomeroyi (strain ATCC 700808 / DSM 15171 / DSS-3) (Silicibacter pomeroyi).